Reading from the N-terminus, the 95-residue chain is Co-chaperonin GroES (95 aa).

This sequence belongs to the GroES chaperonin family. Heptamer of 7 subunits arranged in a ring. Interacts with the chaperonin GroEL.

It localises to the cytoplasm. In terms of biological role, together with the chaperonin GroEL, plays an essential role in assisting protein folding. The GroEL-GroES system forms a nano-cage that allows encapsulation of the non-native substrate proteins and provides a physical environment optimized to promote and accelerate protein folding. GroES binds to the apical surface of the GroEL ring, thereby capping the opening of the GroEL channel. This is Co-chaperonin GroES from Rickettsia akari (strain Hartford).